The primary structure comprises 491 residues: [Pyruvate dehydrogenase (acetyl-transferring)] kinase 2, mitochondrial (491 aa).

Residues 153–480 (PTIRTLEDAS…DVVLKLGNLM (328 aa)) enclose the Histidine kinase domain. ATP is bound by residues 300 to 307 (EILRNTYE), Asp-341, 359 to 360 (SK), and 383 to 446 (DEVH…GIGL).

Belongs to the PDK/BCKDK protein kinase family. Interacts with PKP1.

The protein localises to the mitochondrion matrix. It carries out the reaction L-seryl-[pyruvate dehydrogenase E1 alpha subunit] + ATP = O-phospho-L-seryl-[pyruvate dehydrogenase E1 alpha subunit] + ADP + H(+). Its function is as follows. Inhibits the mitochondrial pyruvate dehydrogenase complex by phosphorylation of the E1 alpha subunit (PDA1), thus contributing to the regulation of glucose metabolism. In Saccharomyces cerevisiae (strain ATCC 204508 / S288c) (Baker's yeast), this protein is [Pyruvate dehydrogenase (acetyl-transferring)] kinase 2, mitochondrial.